The following is a 233-amino-acid chain: Lipoprotein-releasing system ATP-binding protein LolD (233 aa).

The region spanning 6–233 (LQCDNLCKRY…TAELSLMGAE (228 aa)) is the ABC transporter domain. Position 42 to 49 (42 to 49 (GSSGSGKS)) interacts with ATP.

This sequence belongs to the ABC transporter superfamily. Lipoprotein translocase (TC 3.A.1.125) family. As to quaternary structure, the complex is composed of two ATP-binding proteins (LolD) and two transmembrane proteins (LolC and LolE).

The protein localises to the cell inner membrane. Functionally, part of the ABC transporter complex LolCDE involved in the translocation of mature outer membrane-directed lipoproteins, from the inner membrane to the periplasmic chaperone, LolA. Responsible for the formation of the LolA-lipoprotein complex in an ATP-dependent manner. In Shigella boydii serotype 4 (strain Sb227), this protein is Lipoprotein-releasing system ATP-binding protein LolD.